Reading from the N-terminus, the 145-residue chain is Hemoglobin subunit beta-A (145 aa).

Residues 1–145 (MLTAEEKAAV…VANALAHRYH (145 aa)) enclose the Globin domain. Residues His62 and His91 each contribute to the heme b site.

Belongs to the globin family. Heterotetramer of two alpha chains and two beta chains. Red blood cells.

Functionally, involved in oxygen transport from the lung to the various peripheral tissues. In Capra hircus (Goat), this protein is Hemoglobin subunit beta-A.